Consider the following 106-residue polypeptide: Small ribosomal subunit protein uS10 (106 aa).

The protein belongs to the universal ribosomal protein uS10 family. In terms of assembly, part of the 30S ribosomal subunit.

Its function is as follows. Involved in the binding of tRNA to the ribosomes. The sequence is that of Small ribosomal subunit protein uS10 from Solibacter usitatus (strain Ellin6076).